Here is a 334-residue protein sequence, read N- to C-terminus: D-fructose 1,6-bisphosphatase class 2/sedoheptulose 1,7-bisphosphatase (334 aa).

Residues D33, E57, D85, and E88 each contribute to the Mn(2+) site. Residues 88–90 (EGT), Y119, 164–166 (RAR), and 186–188 (DGD) each bind substrate. E213 contacts Mn(2+).

This sequence belongs to the FBPase class 2 family. As to quaternary structure, homotetramer. The cofactor is Mn(2+).

It catalyses the reaction beta-D-fructose 1,6-bisphosphate + H2O = beta-D-fructose 6-phosphate + phosphate. It carries out the reaction D-sedoheptulose 1,7-bisphosphate + H2O = D-sedoheptulose 7-phosphate + phosphate. Its pathway is carbohydrate biosynthesis; Calvin cycle. In terms of biological role, catalyzes the hydrolysis of fructose 1,6-bisphosphate (Fru 1,6-P2) and sedoheptulose 1,7-bisphosphate (Sed 1,7-P2) to fructose 6-phosphate and sedoheptulose 7-phosphate, respectively. The sequence is that of D-fructose 1,6-bisphosphatase class 2/sedoheptulose 1,7-bisphosphatase from Synechococcus sp. (strain RCC307).